The chain runs to 348 residues: 3-isopropylmalate dehydrogenase (348 aa).

76-87 (GPKWTDPNNRPE) serves as a coordination point for NAD(+). 4 residues coordinate substrate: Arg-94, Arg-104, Arg-132, and Asp-217. Residues Asp-217, Asp-241, and Asp-245 each coordinate Mg(2+). 275-287 (GSAPDIAGKNVAN) serves as a coordination point for NAD(+).

This sequence belongs to the isocitrate and isopropylmalate dehydrogenases family. LeuB type 1 subfamily. Homodimer. Mg(2+) is required as a cofactor. The cofactor is Mn(2+).

The protein resides in the cytoplasm. The enzyme catalyses (2R,3S)-3-isopropylmalate + NAD(+) = 4-methyl-2-oxopentanoate + CO2 + NADH. Its pathway is amino-acid biosynthesis; L-leucine biosynthesis; L-leucine from 3-methyl-2-oxobutanoate: step 3/4. Catalyzes the oxidation of 3-carboxy-2-hydroxy-4-methylpentanoate (3-isopropylmalate) to 3-carboxy-4-methyl-2-oxopentanoate. The product decarboxylates to 4-methyl-2 oxopentanoate. This Staphylococcus aureus (strain MRSA252) protein is 3-isopropylmalate dehydrogenase.